The primary structure comprises 117 residues: Crustacean hyperglycemic hormones 3 (117 aa).

The first 24 residues, 1–24 (MVTPRMLSALSAVLLLVLTASSSA), serve as a signal peptide directing secretion. 3 cysteine pairs are disulfide-bonded: Cys50–Cys86, Cys66–Cys82, and Cys69–Cys95. A Valine amide modification is found at Val115.

It belongs to the arthropod CHH/MIH/GIH/VIH hormone family. In terms of tissue distribution, produced by the medulla terminalis X-organ in the eyestalks and transported to the sinus gland where they are stored and released.

It localises to the secreted. Hormone found in the sinus gland of isopods and decapods which controls the blood sugar level. Has a secretagogue action over the amylase released from the midgut gland. May act as a stress hormone and may be involved in the control of molting and reproduction. This Penaeus japonicus (Kuruma prawn) protein is Crustacean hyperglycemic hormones 3.